We begin with the raw amino-acid sequence, 392 residues long: Protein trapped in endoderm-1 (392 aa).

Over 1–39 (MDQDMGMATGYFQDADMQMDEPAAATQSIYPHSATLFAA) the chain is Extracellular. A helical transmembrane segment spans residues 40-60 (ISACVFVTIGVLGNLITLLAL). The Cytoplasmic segment spans residues 61 to 73 (LKSPTIREHATTA). A helical transmembrane segment spans residues 74–94 (FVISLSISDLLFCSFSLPLTA). Residues 95–110 (VRFFQESWTFGTTLCK) lie on the Extracellular side of the membrane. Residues 111–131 (IFPVIFYGNVAVSLLSMVGIT) form a helical membrane-spanning segment. Residues 132–156 (LNRYILIACHSRYSQIYKPKFITLQ) are Cytoplasmic-facing. Residues 157–177 (LLFVWAVSFLLLLPPILGIWG) form a helical membrane-spanning segment. Residues 178-202 (EMGLDEATFSCTILKKEGRSIKKTL) lie on the Extracellular side of the membrane. Residues 203–223 (FVIGFLLPCLVIIVSYSCIYI) form a helical membrane-spanning segment. The Cytoplasmic segment spans residues 224-268 (TVLHQKKKIRNHDNFQIAAAKGSSSSGGGSYMTTTCTRKAREDNR). The chain crosses the membrane as a helical span at residues 269–289 (LTVMMVTIFLCFLVCFLPLML). Over 290-302 (ANVVDDERNTSYP) the chain is Extracellular. N-linked (GlcNAc...) asparagine glycosylation is present at asparagine 298. The helical transmembrane segment at 303 to 323 (WLHIIASVMAWASSVINPIIY) threads the bilayer. Topologically, residues 324 to 392 (AASNRNYRVA…INQMCQTYSV (69 aa)) are cytoplasmic. A phosphoserine mark is found at serine 359, serine 362, and serine 366. Threonine 372 is subject to Phosphothreonine.

Belongs to the G-protein coupled receptor 1 family. In terms of tissue distribution, in embryos, expression is seen at highest levels in the cuprophilic cells and at lower levels in the amnioserosa, developing CNS, cardiac mesoderm primordium and midline glia.

Its subcellular location is the cell membrane. Functionally, essential for the first active step of germ cell migration: transepithelial migration of germ cells through the posterior midgut (PMG) epithelium. This Drosophila melanogaster (Fruit fly) protein is Protein trapped in endoderm-1 (Tre1).